Consider the following 510-residue polypeptide: NAD(P)H-quinone oxidoreductase subunit 2 B, chloroplastic (510 aa).

The next 13 membrane-spanning stretches (helical) occupy residues 24–44 (LLLF…GLIL), 57–77 (IPWL…ALLF), 99–119 (IFQF…VEYI), 124–144 (MAIT…MFLC), 149–169 (LITI…LSGY), 183–203 (YLLM…WLYG), 227–247 (PGIS…LSPA), 295–315 (WHLL…LIAI), 323–343 (MLAY…IVGD), 354–374 (YMLF…LFGL), 395–415 (ALSL…AGFF), 418–438 (LYLF…IGLL), and 484–504 (MIVC…IIAI).

It belongs to the complex I subunit 2 family. NDH is composed of at least 16 different subunits, 5 of which are encoded in the nucleus.

It localises to the plastid. The protein resides in the chloroplast thylakoid membrane. The catalysed reaction is a plastoquinone + NADH + (n+1) H(+)(in) = a plastoquinol + NAD(+) + n H(+)(out). The enzyme catalyses a plastoquinone + NADPH + (n+1) H(+)(in) = a plastoquinol + NADP(+) + n H(+)(out). NDH shuttles electrons from NAD(P)H:plastoquinone, via FMN and iron-sulfur (Fe-S) centers, to quinones in the photosynthetic chain and possibly in a chloroplast respiratory chain. The immediate electron acceptor for the enzyme in this species is believed to be plastoquinone. Couples the redox reaction to proton translocation, and thus conserves the redox energy in a proton gradient. This is NAD(P)H-quinone oxidoreductase subunit 2 B, chloroplastic from Helianthus annuus (Common sunflower).